A 352-amino-acid polypeptide reads, in one-letter code: Ni-sirohydrochlorin a,c-diamide reductive cyclase complex, component CfbD (352 aa).

The protein belongs to the NifD/NifK/NifE/NifN family. As to quaternary structure, homodimer or monomer. The Ni-sirohydrochlorin a,c-diamide reductive cyclase complex is composed of a NifH homolog component CfbC and a NifD homolog component CfbD. The cofactor is [4Fe-4S] cluster.

It carries out the reaction Ni-sirohydrochlorin a,c-diamide + 3 AH2 + ATP + H2O = 15,17(3)-seco-F430-17(3)-acid + 3 A + ADP + phosphate. Involved in the biosynthesis of the unique nickel-containing tetrapyrrole coenzyme F430, the prosthetic group of methyl-coenzyme M reductase (MCR), which plays a key role in methanogenesis and anaerobic methane oxidation. Catalyzes both the six-electron reduction of the tetrahydroporphyrin ring system and the gamma-lactamization of the c-acetamide side chain of Ni-sirohydrochlorin a,c-diamide to yield 15,17(3)-seco-F430-17(3)-acid (seco-F430), the last intermediate in the biosynthesis of the coenzyme F430. The chain is Ni-sirohydrochlorin a,c-diamide reductive cyclase complex, component CfbD from Methanocaldococcus jannaschii (strain ATCC 43067 / DSM 2661 / JAL-1 / JCM 10045 / NBRC 100440) (Methanococcus jannaschii).